A 217-amino-acid polypeptide reads, in one-letter code: Octanoyltransferase (217 aa).

The 180-residue stretch at 30–209 folds into the BPL/LPL catalytic domain; it reads GNRPPTLLLL…AFAEVFGLRP (180 aa). Residues 75–82, 139–141, and 152–154 contribute to the substrate site; these read RGGDVTYH, AIG, and GFA. Cys170 serves as the catalytic Acyl-thioester intermediate.

This sequence belongs to the LipB family.

The protein localises to the cytoplasm. It carries out the reaction octanoyl-[ACP] + L-lysyl-[protein] = N(6)-octanoyl-L-lysyl-[protein] + holo-[ACP] + H(+). It participates in protein modification; protein lipoylation via endogenous pathway; protein N(6)-(lipoyl)lysine from octanoyl-[acyl-carrier-protein]: step 1/2. Its function is as follows. Catalyzes the transfer of endogenously produced octanoic acid from octanoyl-acyl-carrier-protein onto the lipoyl domains of lipoate-dependent enzymes. Lipoyl-ACP can also act as a substrate although octanoyl-ACP is likely to be the physiological substrate. The sequence is that of Octanoyltransferase from Thermus thermophilus (strain ATCC 27634 / DSM 579 / HB8).